The sequence spans 514 residues: Ribonuclease Y (514 aa).

The chain crosses the membrane as a helical span at residues 2–22 (EDLIVAIVVGAFSSAISIFVV). The KH domain occupies 204 to 268 (LINNIPLNDE…VATKTIRELL (65 aa)). The region spanning 330–423 (ALAHTLEVAH…VCAADALSAA (94 aa)) is the HD domain.

The protein belongs to the RNase Y family.

The protein resides in the cell membrane. Functionally, endoribonuclease that initiates mRNA decay. The chain is Ribonuclease Y from Aliarcobacter butzleri (strain RM4018) (Arcobacter butzleri).